A 402-amino-acid chain; its full sequence is Acetate kinase (402 aa).

A Mg(2+)-binding site is contributed by asparagine 7. Lysine 14 contacts ATP. Arginine 95 contributes to the substrate binding site. Aspartate 152 acts as the Proton donor/acceptor in catalysis. Residues 212–216 (HLGNG), 286–288 (DMR), and 334–338 (GIGEN) contribute to the ATP site. Residue glutamate 388 participates in Mg(2+) binding.

It belongs to the acetokinase family. Homodimer. Mg(2+) serves as cofactor. Mn(2+) is required as a cofactor.

The protein localises to the cytoplasm. The catalysed reaction is acetate + ATP = acetyl phosphate + ADP. Its pathway is metabolic intermediate biosynthesis; acetyl-CoA biosynthesis; acetyl-CoA from acetate: step 1/2. Functionally, catalyzes the formation of acetyl phosphate from acetate and ATP. Can also catalyze the reverse reaction. This chain is Acetate kinase, found in Oleidesulfovibrio alaskensis (strain ATCC BAA-1058 / DSM 17464 / G20) (Desulfovibrio alaskensis).